Reading from the N-terminus, the 885-residue chain is Alanine--tRNA ligase (885 aa).

Positions 571, 575, 674, and 678 each coordinate Zn(2+).

The protein belongs to the class-II aminoacyl-tRNA synthetase family. Requires Zn(2+) as cofactor.

It is found in the cytoplasm. It catalyses the reaction tRNA(Ala) + L-alanine + ATP = L-alanyl-tRNA(Ala) + AMP + diphosphate. In terms of biological role, catalyzes the attachment of alanine to tRNA(Ala) in a two-step reaction: alanine is first activated by ATP to form Ala-AMP and then transferred to the acceptor end of tRNA(Ala). Also edits incorrectly charged Ser-tRNA(Ala) and Gly-tRNA(Ala) via its editing domain. This chain is Alanine--tRNA ligase, found in Clavibacter sepedonicus (Clavibacter michiganensis subsp. sepedonicus).